A 165-amino-acid polypeptide reads, in one-letter code: Lithostathine-1 (165 aa).

The N-terminal stretch at 1-21 is a signal peptide; the sequence is MARNAYFILLSCLIVLSPSQG. A Pyrrolidone carboxylic acid modification is found at glutamine 22. One can recognise a C-type lectin domain in the interval 33 to 163; it reads ISCPEGSNAY…DAQYSFVCKF (131 aa). 3 cysteine pairs are disulfide-bonded: cysteine 35-cysteine 46, cysteine 63-cysteine 161, and cysteine 136-cysteine 153. Asparagine 129 is a glycosylation site (N-linked (GlcNAc...) asparagine).

In terms of tissue distribution, expressed only in regenerating islets and normal exocrine pancreas, but not in normal pancreatic islets. Expressed strongly in pancreas, moderately in gall bladder, and weakly in liver.

The protein resides in the secreted. Functionally, might act as an inhibitor of spontaneous calcium carbonate precipitation. The sequence is that of Lithostathine-1 (Reg1) from Mus musculus (Mouse).